The primary structure comprises 325 residues: Bifunctional ligase/repressor BirA (325 aa).

A DNA-binding region (H-T-H motif) is located at residues glycine 23–glutamate 42. The 189-residue stretch at arginine 74–methionine 262 folds into the BPL/LPL catalytic domain. Residues glutamine 118, arginine 122 to arginine 124, and lysine 189 each bind biotin.

It belongs to the biotin--protein ligase family.

The enzyme catalyses biotin + L-lysyl-[protein] + ATP = N(6)-biotinyl-L-lysyl-[protein] + AMP + diphosphate + H(+). Its function is as follows. Acts both as a biotin--[acetyl-CoA-carboxylase] ligase and a repressor. The chain is Bifunctional ligase/repressor BirA from Bacillus subtilis (strain 168).